The chain runs to 265 residues: MVLGLFDSGLGGLTVLREIARRLPAQPVIYFADTARLPYGSRTPAEICRYVREILHWFEQQGVQRVLMACNTSSALALPVVASEYALKVGGLIAPAARAAARRGRRIGVIATAATVQSHAYTRAIQALTPRAQVWEVACPEFVPLVEGGRLLGEEVRSVARRYLAPLVEQRIDTLVYGCTHYPYLAPVIGDLLPASVRCVDPAVAAVAELAAALPPSRRLETRAACHFFVSGDPVRFAQAAYPWLDYYPQVQAVALPPLPAAQTN.

Residues 7 to 8 and 39 to 40 each bind substrate; these read DS and YG. The Proton donor/acceptor role is filled by C70. Residue 71 to 72 coordinates substrate; it reads NT. C179 (proton donor/acceptor) is an active-site residue. 180 to 181 provides a ligand contact to substrate; sequence TH.

It belongs to the aspartate/glutamate racemases family.

It catalyses the reaction L-glutamate = D-glutamate. The protein operates within cell wall biogenesis; peptidoglycan biosynthesis. Functionally, provides the (R)-glutamate required for cell wall biosynthesis. The polypeptide is Glutamate racemase (Gloeobacter violaceus (strain ATCC 29082 / PCC 7421)).